Here is a 339-residue protein sequence, read N- to C-terminus: Ribosomal RNA small subunit methyltransferase H (339 aa).

Residues 52 to 54 (GGH), D71, F98, D130, and Q137 contribute to the S-adenosyl-L-methionine site.

It belongs to the methyltransferase superfamily. RsmH family.

It is found in the cytoplasm. It carries out the reaction cytidine(1402) in 16S rRNA + S-adenosyl-L-methionine = N(4)-methylcytidine(1402) in 16S rRNA + S-adenosyl-L-homocysteine + H(+). Its function is as follows. Specifically methylates the N4 position of cytidine in position 1402 (C1402) of 16S rRNA. The protein is Ribosomal RNA small subunit methyltransferase H of Corynebacterium diphtheriae (strain ATCC 700971 / NCTC 13129 / Biotype gravis).